The primary structure comprises 345 residues: Holliday junction branch migration complex subunit RuvB (345 aa).

Residues 1–182 (MDQRIIASSS…FGIVQRLEFY (182 aa)) are large ATPase domain (RuvB-L). ATP is bound by residues Ile21, Arg22, Gly63, Lys66, Thr67, Thr68, 129 to 131 (EDF), Arg172, Tyr182, and Arg219. A Mg(2+)-binding site is contributed by Thr67. The interval 183–253 (SPQELTRIVI…VAQAAMQMLK (71 aa)) is small ATPAse domain (RuvB-S). Residues 256–345 (PEGFDELDRR…PGIGEPGDLF (90 aa)) are head domain (RuvB-H). Positions 292, 311, and 316 each coordinate DNA.

This sequence belongs to the RuvB family. Homohexamer. Forms an RuvA(8)-RuvB(12)-Holliday junction (HJ) complex. HJ DNA is sandwiched between 2 RuvA tetramers; dsDNA enters through RuvA and exits via RuvB. An RuvB hexamer assembles on each DNA strand where it exits the tetramer. Each RuvB hexamer is contacted by two RuvA subunits (via domain III) on 2 adjacent RuvB subunits; this complex drives branch migration. In the full resolvosome a probable DNA-RuvA(4)-RuvB(12)-RuvC(2) complex forms which resolves the HJ.

The protein resides in the cytoplasm. The catalysed reaction is ATP + H2O = ADP + phosphate + H(+). Its function is as follows. The RuvA-RuvB-RuvC complex processes Holliday junction (HJ) DNA during genetic recombination and DNA repair, while the RuvA-RuvB complex plays an important role in the rescue of blocked DNA replication forks via replication fork reversal (RFR). RuvA specifically binds to HJ cruciform DNA, conferring on it an open structure. The RuvB hexamer acts as an ATP-dependent pump, pulling dsDNA into and through the RuvAB complex. RuvB forms 2 homohexamers on either side of HJ DNA bound by 1 or 2 RuvA tetramers; 4 subunits per hexamer contact DNA at a time. Coordinated motions by a converter formed by DNA-disengaged RuvB subunits stimulates ATP hydrolysis and nucleotide exchange. Immobilization of the converter enables RuvB to convert the ATP-contained energy into a lever motion, pulling 2 nucleotides of DNA out of the RuvA tetramer per ATP hydrolyzed, thus driving DNA branch migration. The RuvB motors rotate together with the DNA substrate, which together with the progressing nucleotide cycle form the mechanistic basis for DNA recombination by continuous HJ branch migration. Branch migration allows RuvC to scan DNA until it finds its consensus sequence, where it cleaves and resolves cruciform DNA. This Xanthomonas oryzae pv. oryzae (strain MAFF 311018) protein is Holliday junction branch migration complex subunit RuvB.